The sequence spans 475 residues: Phenolic acid decarboxylase (475 aa).

Residues asparagine 161, histidine 183, and glutamate 225 each coordinate Mn(2+). Prenylated FMN contacts are provided by residues 161 to 166 (NVGIYR) and 182 to 183 (MH). Glutamate 274 (proton donor) is an active-site residue.

The protein belongs to the UbiD family. YclC subfamily. Requires prenylated FMN as cofactor. Mn(2+) serves as cofactor.

It catalyses the reaction 4-hydroxybenzoate + H(+) = phenol + CO2. It carries out the reaction vanillate + H(+) = guaiacol + CO2. In terms of biological role, involved in the non-oxidative decarboxylation and detoxification of phenolic derivatives under both aerobic and anaerobic conditions. Phenolic acid decarboxylase that catalyzes the reversible decarboxylation of 4-hydroxybenzoate and vanillate. The chain is Phenolic acid decarboxylase from Escherichia coli O157:H7.